A 324-amino-acid polypeptide reads, in one-letter code: NADH-ubiquinone oxidoreductase chain 1 (324 aa).

8 consecutive transmembrane segments (helical) span residues 10-30 (MIMT…LTLV), 76-96 (FLFI…WTPL), 107-127 (LGLL…LWSG), 143-163 (VAQT…TIML), 178-198 (PMYL…STLA), 229-249 (LFFL…ITLF), 260-280 (ELFS…FLWI), and 300-320 (FLPL…SYAG).

The protein belongs to the complex I subunit 1 family.

The protein localises to the mitochondrion inner membrane. The catalysed reaction is a ubiquinone + NADH + 5 H(+)(in) = a ubiquinol + NAD(+) + 4 H(+)(out). Functionally, core subunit of the mitochondrial membrane respiratory chain NADH dehydrogenase (Complex I) that is believed to belong to the minimal assembly required for catalysis. Complex I functions in the transfer of electrons from NADH to the respiratory chain. The immediate electron acceptor for the enzyme is believed to be ubiquinone. The sequence is that of NADH-ubiquinone oxidoreductase chain 1 (MT-ND1) from Coturnix japonica (Japanese quail).